The chain runs to 515 residues: Maturase K (515 aa).

The protein belongs to the intron maturase 2 family. MatK subfamily.

It localises to the plastid. The protein localises to the chloroplast. Functionally, usually encoded in the trnK tRNA gene intron. Probably assists in splicing its own and other chloroplast group II introns. In Picea engelmannii (Engelmann's spruce), this protein is Maturase K.